Here is a 726-residue protein sequence, read N- to C-terminus: Probable dipeptidyl-peptidase 5 (726 aa).

An N-terminal signal peptide occupies residues 1 to 19 (MAAAKWLIASLAFASSGLA). N-linked (GlcNAc...) asparagine glycans are attached at residues N96 and N252. Residues 269-291 (AEPINKRNGPRTPQGIEGASSSP) form a disordered region. S558 functions as the Charge relay system in the catalytic mechanism. N605 carries N-linked (GlcNAc...) asparagine glycosylation. Active-site charge relay system residues include D641 and H673. An N-linked (GlcNAc...) asparagine glycan is attached at N699.

The protein belongs to the peptidase S9C family.

It localises to the secreted. Extracellular dipeptidyl-peptidase which removes N-terminal dipeptides sequentially from polypeptides having unsubstituted N-termini. Contributes to pathogenicity. The chain is Probable dipeptidyl-peptidase 5 (DPP5) from Trichophyton verrucosum (strain HKI 0517).